The sequence spans 140 residues: Nucleoside diphosphate kinase (140 aa).

Residues Lys-11, Phe-59, Arg-87, Thr-93, Arg-104, and Asn-114 each contribute to the ATP site. Residue His-117 is the Pros-phosphohistidine intermediate of the active site.

This sequence belongs to the NDK family. In terms of assembly, homotetramer. Requires Mg(2+) as cofactor.

Its subcellular location is the cytoplasm. It catalyses the reaction a 2'-deoxyribonucleoside 5'-diphosphate + ATP = a 2'-deoxyribonucleoside 5'-triphosphate + ADP. It carries out the reaction a ribonucleoside 5'-diphosphate + ATP = a ribonucleoside 5'-triphosphate + ADP. Major role in the synthesis of nucleoside triphosphates other than ATP. The ATP gamma phosphate is transferred to the NDP beta phosphate via a ping-pong mechanism, using a phosphorylated active-site intermediate. The sequence is that of Nucleoside diphosphate kinase from Methylorubrum extorquens (strain CM4 / NCIMB 13688) (Methylobacterium extorquens).